Here is a 508-residue protein sequence, read N- to C-terminus: MEEFKGYLQKGGLKQQHFLYPLLFKEYIYALAYDQGLNASTFNEPDDISGYDKKYSSLLVKRLIKRLYQQNSLIRSVNKDKQTRFVGHNKNFYYQMVSEGFAIVLEIPLSLRLVSSLKEKKDIPKYQNLRSIHSIFSFLEDKFPHLHYISDILLPYPVHLEKLIQILQCWIHDGPTLHLLRLFFHDYHNWSNCITTKKSSYGFSKENPSLYRFLYNSYVVEAESIFVFLRKSSSYLRSTSFGPLLERTHFYGKMKHIGVTRCNDFQKPLGLFKDPMMHYVRYQSKVLIASRGTYLLLKKWKSYFMNLWQCHFDFWSEPSRIHINQFPKFSFYFLGYLSSIEMTPSSIKSQMLENYFLIDTVTPKFQTIIAISPIIGSLARARFCNLSGNPISKPVWTDLSDSEIIDRFGRLCRNLSHYYSGSSKKQSLYRIKYILRLSCARTLARKHKTTVRTFLQKLGSEFFEEFFMEEEKVLSLMLSRTSNPLHQLYREPIWFLDIIRLNDLVNHL.

It belongs to the intron maturase 2 family. MatK subfamily.

The protein localises to the plastid. It localises to the chloroplast. Its function is as follows. Usually encoded in the trnK tRNA gene intron. Probably assists in splicing its own and other chloroplast group II introns. In Wolffia arrhiza (Rootless water-meal), this protein is Maturase K.